A 314-amino-acid polypeptide reads, in one-letter code: tRNA dimethylallyltransferase (314 aa).

ATP is bound at residue 9–16 (GPTAVGKT). Residue 11–16 (TAVGKT) participates in substrate binding. The tract at residues 34–37 (DSVQ) is interaction with substrate tRNA.

Belongs to the IPP transferase family. Monomer. Mg(2+) serves as cofactor.

The enzyme catalyses adenosine(37) in tRNA + dimethylallyl diphosphate = N(6)-dimethylallyladenosine(37) in tRNA + diphosphate. In terms of biological role, catalyzes the transfer of a dimethylallyl group onto the adenine at position 37 in tRNAs that read codons beginning with uridine, leading to the formation of N6-(dimethylallyl)adenosine (i(6)A). This chain is tRNA dimethylallyltransferase, found in Desulfitobacterium hafniense (strain DSM 10664 / DCB-2).